Consider the following 249-residue polypeptide: ATP synthase subunit a (249 aa).

Helical transmembrane passes span 33-53 (GQVF…SLLA), 92-112 (VPFI…GALI), 131-151 (INTT…AGFS), 196-216 (LVVA…AMIL), and 217-237 (GLFT…SYIG).

Belongs to the ATPase A chain family. As to quaternary structure, F-type ATPases have 2 components, CF(1) - the catalytic core - and CF(0) - the membrane proton channel. CF(1) has five subunits: alpha(3), beta(3), gamma(1), delta(1), epsilon(1). CF(0) has four main subunits: a, b, b' and c.

The protein localises to the cellular thylakoid membrane. In terms of biological role, key component of the proton channel; it plays a direct role in the translocation of protons across the membrane. The sequence is that of ATP synthase subunit a from Synechococcus elongatus (strain ATCC 33912 / PCC 7942 / FACHB-805) (Anacystis nidulans R2).